We begin with the raw amino-acid sequence, 598 residues long: Nuclear receptor subfamily 4 group A member 2 (598 aa).

A disordered region spans residues 1-22; the sequence is MPCVQAQYGSSPQGASPASQSY. A compositionally biased stretch (low complexity) spans 8 to 22; sequence YGSSPQGASPASQSY. Residues 260–335 constitute a DNA-binding region (nuclear receptor); that stretch reads EGLCAVCGDN…VGMVKEVVRT (76 aa). 2 NR C4-type zinc fingers span residues 263–283 and 299–323; these read CAVCGDNAACQHYGVRTCEGC and CLANKNCPVDKRRRNRCQYCRFQKC. The Bipartite nuclear localization signal (NLS1) motif lies at 287-314; it reads FKRTVQKNAKYVCLANKNCPVDKRRRNR. Residues 337 to 361 form a disordered region; the sequence is SLKGRRGRLPSKPKSPQDPSPPSPP. The Nuclear localization signal (NLS1) motif lies at 338-350; that stretch reads LKGRRGRLPSKPK. Over residues 352 to 361 the composition is skewed to pro residues; the sequence is PQDPSPPSPP. The NR LBD domain occupies 360–595; the sequence is PPVSLISALV…AIIDKLFLDT (236 aa). A nuclear export sequence (NES1) motif is present at residues 443-452; sequence FLELFVLRLA. Residues 568–577 carry the nuclear export sequence (NES2) motif; it reads QGLQRIFYLK.

Belongs to the nuclear hormone receptor family. NR4 subfamily. Interacts with SFPQ, NCOR2, SIN3A and HADC1. The interaction with NCOR2 increases in the absence of PITX3. Interacts with PER2. As to expression, shows a ubiquitous distribution in the cerebral cortex, hippocampus, thalamus, amygdala, and midbrain. Expression increases in prenatally stressed adult offspring in the ventral tegmental area, whereas no changes are observed in the substantia nigra area (at protein level). Not expressed in quiescent liver but is rapidly induced following partial hepatectomy and is specific to hepatic growth as it is not induced in other mitogen-treated cells. Expressed at very low levels in the lung, spleen and stomach and at high levels in the brain.

It localises to the cytoplasm. Its subcellular location is the nucleus. Functionally, transcriptional regulator which is important for the differentiation and maintenance of meso-diencephalic dopaminergic (mdDA) neurons during development. It is crucial for expression of a set of genes such as SLC6A3, SLC18A2, TH and DRD2 which are essential for development of mdDA neurons. May confer liver-specific regulation of delayed-early genes induced later in the G1 phase of regeneration along with NR4A1. The sequence is that of Nuclear receptor subfamily 4 group A member 2 (Nr4a2) from Rattus norvegicus (Rat).